The chain runs to 79 residues: Cell division protein ZapB (79 aa).

Residues Glu-4–Glu-78 adopt a coiled-coil conformation.

This sequence belongs to the ZapB family. As to quaternary structure, homodimer. The ends of the coiled-coil dimer bind to each other, forming polymers. Interacts with FtsZ.

Its subcellular location is the cytoplasm. Its function is as follows. Non-essential, abundant cell division factor that is required for proper Z-ring formation. It is recruited early to the divisome by direct interaction with FtsZ, stimulating Z-ring assembly and thereby promoting cell division earlier in the cell cycle. Its recruitment to the Z-ring requires functional FtsA or ZipA. This Erwinia tasmaniensis (strain DSM 17950 / CFBP 7177 / CIP 109463 / NCPPB 4357 / Et1/99) protein is Cell division protein ZapB.